The primary structure comprises 166 residues: MAAAPAGVGRLEEEALRRKERLKALREKTGRKDREDGEPQTKQLREEGEEVGKHRGLRLRNYVPEDEDLKRRRVPQAKPVAVEEKVKEQLEAAKPEPVIEEVDLANLAPRKPDWDLKRDVAKKLEKLEKRTQRAIAELIRERLKGQEDSLASAVDATTGQEACDSD.

Met-1 is modified (N-acetylmethionine). A coiled-coil region spans residues 8–28 (VGRLEEEALRRKERLKALREK). A compositionally biased stretch (basic and acidic residues) spans 21–53 (RLKALREKTGRKDREDGEPQTKQLREEGEEVGK). The tract at residues 21-55 (RLKALREKTGRKDREDGEPQTKQLREEGEEVGKHR) is disordered. N6-acetyllysine is present on Lys-53. A Glycyl lysine isopeptide (Lys-Gly) (interchain with G-Cter in SUMO2) cross-link involves residue Lys-94. Residues 115–144 (DLKRDVAKKLEKLEKRTQRAIAELIRERLK) are a coiled coil. The tract at residues 146 to 166 (QEDSLASAVDATTGQEACDSD) is disordered. 2 positions are modified to phosphoserine: Ser-149 and Ser-165.

This is Coiled-coil domain-containing protein 12 (Ccdc12) from Mus musculus (Mouse).